We begin with the raw amino-acid sequence, 441 residues long: Pre-mRNA-splicing factor PRP46 (441 aa).

2 disordered regions span residues 1–22 (MPVA…NEPS) and 81–107 (MGAS…LTNL). Residues 83–107 (ASSSALTKHTPSASQPTTHDSLTNL) are compositionally biased toward polar residues. WD repeat units follow at residues 130-169 (GHQG…LRLT), 172-211 (GHIM…VVRH), 214-253 (GHLS…PVVV), 256-295 (GHKS…TMTT), 298-336 (HHKK…LVLN), 339-379 (DQNA…QSTQ), and 388-427 (ESEN…TAES).

This sequence belongs to the WD repeat PRL1/PRL2 family. In terms of assembly, associated with the spliceosome.

The protein resides in the cytoplasm. It is found in the nucleus. Involved in pre-mRNA splicing and required for cell cycle progression at G2/M. This Yarrowia lipolytica (strain CLIB 122 / E 150) (Yeast) protein is Pre-mRNA-splicing factor PRP46 (PRP46).